The following is a 419-amino-acid chain: Serine hydroxymethyltransferase (419 aa).

(6S)-5,6,7,8-tetrahydrofolate contacts are provided by residues leucine 121 and 125–127 (GHL). Lysine 230 carries the N6-(pyridoxal phosphate)lysine modification. 354 to 356 (SPF) contributes to the (6S)-5,6,7,8-tetrahydrofolate binding site.

It belongs to the SHMT family. Homodimer. It depends on pyridoxal 5'-phosphate as a cofactor.

The protein localises to the cytoplasm. It carries out the reaction (6R)-5,10-methylene-5,6,7,8-tetrahydrofolate + glycine + H2O = (6S)-5,6,7,8-tetrahydrofolate + L-serine. The protein operates within one-carbon metabolism; tetrahydrofolate interconversion. It functions in the pathway amino-acid biosynthesis; glycine biosynthesis; glycine from L-serine: step 1/1. In terms of biological role, catalyzes the reversible interconversion of serine and glycine with tetrahydrofolate (THF) serving as the one-carbon carrier. This reaction serves as the major source of one-carbon groups required for the biosynthesis of purines, thymidylate, methionine, and other important biomolecules. Also exhibits THF-independent aldolase activity toward beta-hydroxyamino acids, producing glycine and aldehydes, via a retro-aldol mechanism. The chain is Serine hydroxymethyltransferase from Prochlorococcus marinus (strain SARG / CCMP1375 / SS120).